The primary structure comprises 1174 residues: Pecanex-like protein 4 (1174 aa).

14 helical membrane passes run 40-60, 72-92, 140-160, 173-193, 217-237, 244-264, 284-304, 307-327, 366-386, 394-414, 451-471, 543-563, 580-600, and 643-663; these read IYVNQIVLFLMPWALGGTGTL, AAALSGGLMVFTAAVIQLISV, TVFHSVLAGLVCGLGTWYLLP, TAVLFVFGWITLCIGEYSLIV, LYIFFFVSVDLAHRFIVNIPA, ILHILFVLLPFLWALGTLPPP, SMSTHLRLLVMFIVSAGAAVV, FIPSTVGVVLFMTGLGFLLSL, FLFIAVLGMALLEAGLLHHYV, SGAQAVVGYVLMVLLSIVWIL, IGAVRWILLTLVSPLAMVAFL, LIQFITKLQFAVTVLLALWTE, VFAPFVLGIIVLSTLLSSPLL, and LTAALQTAMAAGSLGLLLPGS. Over residues 785–797 the composition is skewed to polar residues; the sequence is PSTQENKTENTGE. The tract at residues 785–875 is disordered; it reads PSTQENKTEN…DDHSAGTGPK (91 aa). Asn-790 is a glycosylation site (N-linked (GlcNAc...) asparagine). The span at 798–810 shows a compositional bias: low complexity; it reads ASPALPPAANSSP. Over residues 835-846 the composition is skewed to basic and acidic residues; the sequence is PAIKNRKEKLQS. N-linked (GlcNAc...) asparagine glycans are attached at residues Asn-1122 and Asn-1149.

Belongs to the pecanex family.

Its subcellular location is the membrane. The chain is Pecanex-like protein 4 from Mus musculus (Mouse).